The following is a 319-amino-acid chain: Coproporphyrin III ferrochelatase 2 (319 aa).

Fe-coproporphyrin III contacts are provided by residues Tyr-13, Arg-30, 46 to 47 (RY), Ser-54, and Tyr-125. Residues His-181 and Glu-262 each coordinate Fe(2+).

The protein belongs to the ferrochelatase family.

The protein resides in the cytoplasm. The catalysed reaction is Fe-coproporphyrin III + 2 H(+) = coproporphyrin III + Fe(2+). Its pathway is porphyrin-containing compound metabolism; protoheme biosynthesis. In terms of biological role, involved in coproporphyrin-dependent heme b biosynthesis. Catalyzes the insertion of ferrous iron into coproporphyrin III to form Fe-coproporphyrin III. This Bacillus cereus (strain ATCC 14579 / DSM 31 / CCUG 7414 / JCM 2152 / NBRC 15305 / NCIMB 9373 / NCTC 2599 / NRRL B-3711) protein is Coproporphyrin III ferrochelatase 2.